The primary structure comprises 458 residues: Adenylosuccinate synthetase (458 aa).

Residues 17–23 and 45–47 each bind GTP; these read GDEGKGK and GHT. Catalysis depends on D18, which acts as the Proton acceptor. Mg(2+)-binding residues include D18 and G45. Residues 18–21, 43–46, T137, R151, Q247, T262, and R330 each bind IMP; these read DEGK and NAGH. H46 acts as the Proton donor in catalysis. Substrate is bound at residue 326–332; it reads VTTGRSR. Residues R332, 358–360, and 440–442 each bind GTP; these read KLD and STS.

The protein belongs to the adenylosuccinate synthetase family. In terms of assembly, homodimer. Mg(2+) serves as cofactor.

Its subcellular location is the cytoplasm. The catalysed reaction is IMP + L-aspartate + GTP = N(6)-(1,2-dicarboxyethyl)-AMP + GDP + phosphate + 2 H(+). It functions in the pathway purine metabolism; AMP biosynthesis via de novo pathway; AMP from IMP: step 1/2. In terms of biological role, plays an important role in the de novo pathway of purine nucleotide biosynthesis. Catalyzes the first committed step in the biosynthesis of AMP from IMP. This Delftia acidovorans (strain DSM 14801 / SPH-1) protein is Adenylosuccinate synthetase.